The primary structure comprises 463 residues: L-seryl-tRNA(Sec) selenium transferase (463 aa).

At lysine 295 the chain carries N6-(pyridoxal phosphate)lysine.

Belongs to the SelA family. Homodecamer; pentamer of dimers. Binds only one seryl-tRNA(Sec) per dimer. Pyridoxal 5'-phosphate is required as a cofactor.

The protein resides in the cytoplasm. The enzyme catalyses L-seryl-tRNA(Sec) + selenophosphate + H(+) = L-selenocysteinyl-tRNA(Sec) + phosphate. Its pathway is aminoacyl-tRNA biosynthesis; selenocysteinyl-tRNA(Sec) biosynthesis; selenocysteinyl-tRNA(Sec) from L-seryl-tRNA(Sec) (bacterial route): step 1/1. Converts seryl-tRNA(Sec) to selenocysteinyl-tRNA(Sec) required for selenoprotein biosynthesis. The polypeptide is L-seryl-tRNA(Sec) selenium transferase (Serratia proteamaculans (strain 568)).